A 435-amino-acid chain; its full sequence is NADH-quinone oxidoreductase subunit D (435 aa).

The protein belongs to the complex I 49 kDa subunit family. As to quaternary structure, NDH-1 is composed of 14 different subunits. Subunits NuoB, C, D, E, F, and G constitute the peripheral sector of the complex.

The protein localises to the cell inner membrane. It carries out the reaction a quinone + NADH + 5 H(+)(in) = a quinol + NAD(+) + 4 H(+)(out). In terms of biological role, NDH-1 shuttles electrons from NADH, via FMN and iron-sulfur (Fe-S) centers, to quinones in the respiratory chain. The immediate electron acceptor for the enzyme in this species is believed to be ubiquinone. Couples the redox reaction to proton translocation (for every two electrons transferred, four hydrogen ions are translocated across the cytoplasmic membrane), and thus conserves the redox energy in a proton gradient. The chain is NADH-quinone oxidoreductase subunit D from Xanthomonas euvesicatoria pv. vesicatoria (strain 85-10) (Xanthomonas campestris pv. vesicatoria).